A 396-amino-acid chain; its full sequence is Aspartate aminotransferase (396 aa).

3 residues coordinate L-aspartate: Gly-34, Trp-130, and Asn-183. Lys-246 carries the post-translational modification N6-(pyridoxal phosphate)lysine. Arg-374 lines the L-aspartate pocket.

This sequence belongs to the class-I pyridoxal-phosphate-dependent aminotransferase family. Homodimer. Pyridoxal 5'-phosphate is required as a cofactor.

The protein resides in the cytoplasm. It carries out the reaction L-aspartate + 2-oxoglutarate = oxaloacetate + L-glutamate. This Escherichia coli (strain K12) protein is Aspartate aminotransferase (aspC).